Consider the following 74-residue polypeptide: Large ribosomal subunit protein bL31 (74 aa).

Residues cysteine 16, cysteine 18, cysteine 38, and cysteine 41 each coordinate Zn(2+).

Belongs to the bacterial ribosomal protein bL31 family. Type A subfamily. In terms of assembly, part of the 50S ribosomal subunit. The cofactor is Zn(2+).

Functionally, binds the 23S rRNA. The polypeptide is Large ribosomal subunit protein bL31 (Acinetobacter baumannii (strain AB307-0294)).